The following is a 236-amino-acid chain: MEFKMQKIILGMLVVTASNAMALNNNFNVYGKVGVDLVSRFDTIAITRHDTQAPKNTARFSPSLFAEITYNATPKTEVGLGLGYIHRKSSHHIIKQKTDNGNRALIDVIEEYPVNRYNSIPLYFLVKHNFYSQSDLRSYLKVDFGYAFNKTKSTLNLTESTDAAGNNQYYIEKHNISLNVENGNYYGIGFGVEYKNILAEIAYTHTDSRLTYSSKLIRGESEYKNDALRFSVGYRF.

Residues 1–22 (MEFKMQKIILGMLVVTASNAMA) form the signal peptide.

This is an uncharacterized protein from Pasteurella multocida (strain Pm70).